We begin with the raw amino-acid sequence, 163 residues long: Small ribosomal subunit protein eS10A (163 aa).

Residues 92 to 163 (LTQTTRSNAV…GFGRASRYDN (72 aa)) are disordered. A compositionally biased stretch (gly residues) spans 105 to 116 (GGPGGPGGGFGG).

The protein belongs to the eukaryotic ribosomal protein eS10 family.

The protein localises to the cytoplasm. This chain is Small ribosomal subunit protein eS10A (RpS10a), found in Drosophila melanogaster (Fruit fly).